We begin with the raw amino-acid sequence, 294 residues long: Shell matrix protein (294 aa).

In terms of tissue distribution, component of the organic matrix of calcified shell layers like nacre and prisms.

The protein localises to the secreted. The chain is Shell matrix protein from Mytilus californianus (California mussel).